The sequence spans 884 residues: Probable inorganic carbon transporter subunit DabA (884 aa).

Zn(2+) contacts are provided by Cys-390, Asp-392, His-582, and Cys-597.

This sequence belongs to the inorganic carbon transporter (TC 9.A.2) DabA family. As to quaternary structure, forms a complex with DabB. Zn(2+) serves as cofactor.

It is found in the cell membrane. Part of an energy-coupled inorganic carbon pump. This is Probable inorganic carbon transporter subunit DabA from Staphylococcus saprophyticus subsp. saprophyticus (strain ATCC 15305 / DSM 20229 / NCIMB 8711 / NCTC 7292 / S-41).